A 305-amino-acid chain; its full sequence is UDP-3-O-acyl-N-acetylglucosamine deacetylase (305 aa).

Zn(2+) contacts are provided by His79, His238, and Asp242. His265 serves as the catalytic Proton donor.

This sequence belongs to the LpxC family. Zn(2+) is required as a cofactor.

It catalyses the reaction a UDP-3-O-[(3R)-3-hydroxyacyl]-N-acetyl-alpha-D-glucosamine + H2O = a UDP-3-O-[(3R)-3-hydroxyacyl]-alpha-D-glucosamine + acetate. The protein operates within glycolipid biosynthesis; lipid IV(A) biosynthesis; lipid IV(A) from (3R)-3-hydroxytetradecanoyl-[acyl-carrier-protein] and UDP-N-acetyl-alpha-D-glucosamine: step 2/6. In terms of biological role, catalyzes the hydrolysis of UDP-3-O-myristoyl-N-acetylglucosamine to form UDP-3-O-myristoylglucosamine and acetate, the committed step in lipid A biosynthesis. The polypeptide is UDP-3-O-acyl-N-acetylglucosamine deacetylase (Vibrio atlanticus (strain LGP32) (Vibrio splendidus (strain Mel32))).